A 736-amino-acid chain; its full sequence is Factor of DNA methylation 4 (736 aa).

Basic and acidic residues-rich tracts occupy residues 80 to 90 and 144 to 167; these read RKYLRPRERPR and DSGR…SNED. Residues 80–167 form a disordered region; that stretch reads RKYLRPRERP…KPDPFFSNED (88 aa). Residues 360-597 adopt a coiled-coil conformation; the sequence is TLVSNLENTL…RSMRELTTRA (238 aa).

In terms of biological role, acts in association with FDM3 and FDM5 for RNA-directed DNA methylation (RdDM). In Arabidopsis thaliana (Mouse-ear cress), this protein is Factor of DNA methylation 4.